A 310-amino-acid chain; its full sequence is Malate dehydrogenase (310 aa).

NAD(+) is bound by residues 7 to 12 and Asp-32; that span reads GAGNVG. 2 residues coordinate substrate: Arg-81 and Arg-87. Residues Asn-94 and 117 to 119 contribute to the NAD(+) site; that span reads VSN. Residues Asn-119 and Arg-150 each contribute to the substrate site. The Proton acceptor role is filled by His-174.

It belongs to the LDH/MDH superfamily. MDH type 3 family.

The catalysed reaction is (S)-malate + NAD(+) = oxaloacetate + NADH + H(+). In terms of biological role, catalyzes the reversible oxidation of malate to oxaloacetate. The sequence is that of Malate dehydrogenase from Chlorobium chlorochromatii (strain CaD3).